The primary structure comprises 550 residues: Dihydroxy-acid dehydratase (550 aa).

A Mg(2+)-binding site is contributed by aspartate 78. Position 119 (cysteine 119) interacts with [2Fe-2S] cluster. 2 residues coordinate Mg(2+): aspartate 120 and lysine 121. Lysine 121 is modified (N6-carboxylysine). Cysteine 191 is a binding site for [2Fe-2S] cluster. Glutamate 440 is a Mg(2+) binding site. Serine 466 acts as the Proton acceptor in catalysis.

Belongs to the IlvD/Edd family. Homodimer. It depends on [2Fe-2S] cluster as a cofactor. Mg(2+) serves as cofactor.

It carries out the reaction (2R)-2,3-dihydroxy-3-methylbutanoate = 3-methyl-2-oxobutanoate + H2O. The catalysed reaction is (2R,3R)-2,3-dihydroxy-3-methylpentanoate = (S)-3-methyl-2-oxopentanoate + H2O. It participates in amino-acid biosynthesis; L-isoleucine biosynthesis; L-isoleucine from 2-oxobutanoate: step 3/4. The protein operates within amino-acid biosynthesis; L-valine biosynthesis; L-valine from pyruvate: step 3/4. Functionally, functions in the biosynthesis of branched-chain amino acids. Catalyzes the dehydration of (2R,3R)-2,3-dihydroxy-3-methylpentanoate (2,3-dihydroxy-3-methylvalerate) into 2-oxo-3-methylpentanoate (2-oxo-3-methylvalerate) and of (2R)-2,3-dihydroxy-3-methylbutanoate (2,3-dihydroxyisovalerate) into 2-oxo-3-methylbutanoate (2-oxoisovalerate), the penultimate precursor to L-isoleucine and L-valine, respectively. In Methanococcus maripaludis (strain C6 / ATCC BAA-1332), this protein is Dihydroxy-acid dehydratase.